Consider the following 130-residue polypeptide: Lysozyme C (130 aa).

A C-type lysozyme domain is found at 1–130 (KIYERCELAR…LTPYIRGCGV (130 aa)). 4 cysteine pairs are disulfide-bonded: Cys-6–Cys-128, Cys-30–Cys-116, Cys-65–Cys-81, and Cys-77–Cys-95. Catalysis depends on residues Glu-35 and Asp-53.

It belongs to the glycosyl hydrolase 22 family. As to quaternary structure, monomer.

Its subcellular location is the secreted. It carries out the reaction Hydrolysis of (1-&gt;4)-beta-linkages between N-acetylmuramic acid and N-acetyl-D-glucosamine residues in a peptidoglycan and between N-acetyl-D-glucosamine residues in chitodextrins.. Lysozymes have primarily a bacteriolytic function; those in tissues and body fluids are associated with the monocyte-macrophage system and enhance the activity of immunoagents. The chain is Lysozyme C (LYZ) from Oryctolagus cuniculus (Rabbit).